Reading from the N-terminus, the 514-residue chain is 2,3-bisphosphoglycerate-independent phosphoglycerate mutase (514 aa).

Residues Asp-13 and Ser-63 each contribute to the Mn(2+) site. Residue Ser-63 is the Phosphoserine intermediate of the active site. Residues His-124, 154–155 (RD), Arg-186, Arg-192, 258–261 (RADR), and Lys-332 contribute to the substrate site. 5 residues coordinate Mn(2+): Asp-399, His-403, Asp-440, His-441, and His-459.

Belongs to the BPG-independent phosphoglycerate mutase family. Monomer. Mn(2+) is required as a cofactor.

The catalysed reaction is (2R)-2-phosphoglycerate = (2R)-3-phosphoglycerate. It functions in the pathway carbohydrate degradation; glycolysis; pyruvate from D-glyceraldehyde 3-phosphate: step 3/5. Functionally, catalyzes the interconversion of 2-phosphoglycerate and 3-phosphoglycerate. This is 2,3-bisphosphoglycerate-independent phosphoglycerate mutase from Legionella pneumophila (strain Corby).